A 250-amino-acid polypeptide reads, in one-letter code: Isoprenyl transferase (250 aa).

Asp-27 is an active-site residue. Asp-27 is a binding site for Mg(2+). Substrate is bound by residues 28-31 (GNRR), Trp-32, His-48, and 76-78 (STE). Residue Asn-79 is the Proton acceptor of the active site. Substrate-binding positions include Phe-80, Arg-82, Arg-199, and 205–207 (RVS). Residue Glu-218 participates in Mg(2+) binding.

The protein belongs to the UPP synthase family. In terms of assembly, homodimer. Requires Mg(2+) as cofactor.

In terms of biological role, catalyzes the condensation of isopentenyl diphosphate (IPP) with allylic pyrophosphates generating different type of terpenoids. The protein is Isoprenyl transferase of Chlamydia pneumoniae (Chlamydophila pneumoniae).